Consider the following 64-residue polypeptide: Large ribosomal subunit protein bL35 (64 aa).

The segment covering 1–45 (MPKMKTHKGAAKRFKKTGKGKIKRRKAFKSHILTKKTPKRKRNLR) has biased composition (basic residues). Positions 1 to 64 (MPKMKTHKGA…EEKRIKRLLP (64 aa)) are disordered.

Belongs to the bacterial ribosomal protein bL35 family.

This is Large ribosomal subunit protein bL35 from Natranaerobius thermophilus (strain ATCC BAA-1301 / DSM 18059 / JW/NM-WN-LF).